Here is a 132-residue protein sequence, read N- to C-terminus: Small ribosomal subunit protein uS8 (132 aa).

Belongs to the universal ribosomal protein uS8 family. In terms of assembly, part of the 30S ribosomal subunit. Contacts proteins S5 and S12.

Functionally, one of the primary rRNA binding proteins, it binds directly to 16S rRNA central domain where it helps coordinate assembly of the platform of the 30S subunit. This is Small ribosomal subunit protein uS8 from Rhodopseudomonas palustris (strain BisA53).